A 251-amino-acid chain; its full sequence is MSGHNKWSKIKYVKAKEDAKKGKVFARFAHEIMLAAKSGGGDPDLNPRLRAAIDGAKAVSTPKENIERAIKKGTGELGGATIQEITYEGYGPSGTAFLIEVATDNTNRSASELRTLFTKNGGSIGTPGSVAYQFERKGEARIMAEGLTEDSAMDLALECGADDVEQGDSDNEWVFVTSPTELNNVCAALREAGHTVISMKLISVAQNASVINDLETAKAALRLYEALDDYDDALNVFSNFDVAEEILEQLG.

It belongs to the TACO1 family.

It localises to the cytoplasm. The polypeptide is Probable transcriptional regulatory protein Amuc_0709 (Akkermansia muciniphila (strain ATCC BAA-835 / DSM 22959 / JCM 33894 / BCRC 81048 / CCUG 64013 / CIP 107961 / Muc)).